Here is a 290-residue protein sequence, read N- to C-terminus: Membrane protein insertase YidC (290 aa).

A signal peptide spans 1–19 (MKKKTLLPLFLGIMVFLAG). C20 carries N-palmitoyl cysteine lipidation. The S-diacylglycerol cysteine moiety is linked to residue C20. 5 consecutive transmembrane segments (helical) span residues 56–76 (YGLA…PFML), 134–154 (MLGC…YFVL), 176–196 (PDIW…YVSS), 207–224 (GYMM…ISLS), and 229–251 (LGLY…NIYY). Positions 270–290 (HNGGSNKKGKNTQVVSKKKKK) are disordered.

It belongs to the OXA1/ALB3/YidC family. Type 2 subfamily.

The protein localises to the cell membrane. Functionally, required for the insertion and/or proper folding and/or complex formation of integral membrane proteins into the membrane. Involved in integration of membrane proteins that insert both dependently and independently of the Sec translocase complex, as well as at least some lipoproteins. This chain is Membrane protein insertase YidC, found in Staphylococcus aureus (strain MRSA252).